The chain runs to 299 residues: MNEFDRVRDYLTDLQDRICAAVEAADGKARFAEDLWKREEGGGGRTRILRDGAVFEQAGIGFSDVSGTRLPPSASAHRPELAGATWRACGVSLVFHPHNPYIPTTHMNVRYFRAERDGEVVAAWFGGGFDLTPFYPFDEDVQHWHRVAQALCVPFGQERYAAHKRWCDEYFFLRHRNETRGVGGLFFDDLGQDFERDFAYQRAVGDGFLDAYIPIVQRRKDTPYGEREREFQLYRRGRYVEFNLVYDRGTLFGLQSGGRAESILMSLPPRVRWEYGFTPEPGSAEARLADYLIPRDWLG.

Substrate is bound at residue serine 92. The a divalent metal cation site is built by histidine 96 and histidine 106. The Proton donor role is filled by histidine 106. Position 108 to 110 (108 to 110 (NVR)) interacts with substrate. Residues histidine 145 and histidine 175 each contribute to the a divalent metal cation site. Positions 239 to 274 (YVEFNLVYDRGTLFGLQSGGRAESILMSLPPRVRWE) are important for dimerization. 257 to 259 (GGR) is a substrate binding site.

Belongs to the aerobic coproporphyrinogen-III oxidase family. As to quaternary structure, homodimer. The cofactor is a divalent metal cation.

Its subcellular location is the cytoplasm. The enzyme catalyses coproporphyrinogen III + O2 + 2 H(+) = protoporphyrinogen IX + 2 CO2 + 2 H2O. Its pathway is porphyrin-containing compound metabolism; protoporphyrin-IX biosynthesis; protoporphyrinogen-IX from coproporphyrinogen-III (O2 route): step 1/1. Functionally, involved in the heme biosynthesis. Catalyzes the aerobic oxidative decarboxylation of propionate groups of rings A and B of coproporphyrinogen-III to yield the vinyl groups in protoporphyrinogen-IX. This is Oxygen-dependent coproporphyrinogen-III oxidase from Xanthomonas axonopodis pv. citri (strain 306).